A 156-amino-acid polypeptide reads, in one-letter code: Small ribosomal subunit protein uS7 (156 aa).

This sequence belongs to the universal ribosomal protein uS7 family. As to quaternary structure, part of the 30S ribosomal subunit. Contacts proteins S9 and S11.

Its function is as follows. One of the primary rRNA binding proteins, it binds directly to 16S rRNA where it nucleates assembly of the head domain of the 30S subunit. Is located at the subunit interface close to the decoding center, probably blocks exit of the E-site tRNA. The protein is Small ribosomal subunit protein uS7 of Thermodesulfovibrio yellowstonii (strain ATCC 51303 / DSM 11347 / YP87).